The sequence spans 61 residues: Large ribosomal subunit protein uL30 (61 aa).

The protein belongs to the universal ribosomal protein uL30 family. In terms of assembly, part of the 50S ribosomal subunit.

This Bifidobacterium adolescentis (strain ATCC 15703 / DSM 20083 / NCTC 11814 / E194a) protein is Large ribosomal subunit protein uL30.